We begin with the raw amino-acid sequence, 1054 residues long: Filament-like plant protein 6 (1054 aa).

3 coiled-coil regions span residues 64–139, 174–200, and 250–341; these read VQIK…VKQH, AEDRAAHLDGALKECMRQIRNLKKDHE, and SNML…RKKL. 2 disordered regions span residues 359–390 and 448–506; these read RDSGDARQKRSPVKVSSPCKSPGGYSSTGSEF and EAQL…KEKD. Composition is skewed to low complexity over residues 371–380, 450–461, and 470–494; these read VKVSSPCKSP, QLQQNNSQKSSL, and SNPSSSISVSEDGNDDSGSCSGSLS. The stretch at 389 to 463 forms a coiled coil; the sequence is EFSLDNAQKF…NNSQKSSLEV (75 aa). Coiled-coil stretches lie at residues 637 to 666 and 788 to 944; these read QNLVEDCHLAEQKLQSIHQDLKNAVSRIHD and ESDS…IFVL. The segment at 951–1054 is disordered; sequence FRPQPEQMRS…SRFFSSKSGY (104 aa). Low complexity predominate over residues 1007–1032; the sequence is PSDSETSDTTTSPSRVGSRLSRSGSS.

This sequence belongs to the FPP family. Interacts with WPP/MAF proteins.

The sequence is that of Filament-like plant protein 6 (FPP6) from Arabidopsis thaliana (Mouse-ear cress).